Reading from the N-terminus, the 590-residue chain is DNA mismatch repair protein MutL (590 aa).

Belongs to the DNA mismatch repair MutL/HexB family.

Functionally, this protein is involved in the repair of mismatches in DNA. It is required for dam-dependent methyl-directed DNA mismatch repair. May act as a 'molecular matchmaker', a protein that promotes the formation of a stable complex between two or more DNA-binding proteins in an ATP-dependent manner without itself being part of a final effector complex. The protein is DNA mismatch repair protein MutL of Caldanaerobacter subterraneus subsp. tengcongensis (strain DSM 15242 / JCM 11007 / NBRC 100824 / MB4) (Thermoanaerobacter tengcongensis).